An 820-amino-acid chain; its full sequence is MSDTRRRVKVYTLNEDRQWDDRGTGHVSSTYVEELKGMSLLVRAESDGSLLLESKINPNTAYQKQQDTLIVWSEAENYDLALSFQEKAGCDEIWEKICQVQGKDPSVEVTQDLIDESEEERFEEMPETSHLIDLPACELSKLEEIADLVTSVLSSPIRREKLALALENEGYIKKLLQLFQACENLENTEGLHHLYEIIRGILFLNKATLFEVMFSDECIMDVVGCLEYDPALAQPKRHREFLTKTAKFKEVIPITDSELRQKIHQTYRVQYIQDIILPTPSVFEENFLSTLTSFIFFNKVEIVSMLQEDEKFLSEVFAQLTDEATDDDKRRELVNFFKEFCAFSQTLQPQNRDAFFKTLAKLGILPALEIVMGMDDLQVRSAATDIFSYLVEFSPSMVREFVMQEAQQSDDDVLLINVVIEQMICDTDPELGGAVQLMGLLRTLIDPENMLATTNKTEKSEFLNFFYNHCMHVLTAPLLTNTSEDKCEKDNMLGSNTTNTICPDNYQTAQLLALILELLTFCVEHHTYHIKNYIMNKDLLRRVLVLMNSKHTFLALCALRFMRRIIGLKDEFYNRYITKGNLFEPVINALLDNGTRYNLLNSAVIELFEFIRVEDIKSLTAHIVENFYKALESIEYVQTFKGLKTKYEQEKDRQNQKLNSVPSILRSNRFRRDAKALEEDEEMWFNEDDDEEGKAVITPVEKSKTEDDFPDSYEKFMETKKAKESEDKENLPKRASSGGFKFTFSHSPSATNGTNSTNSKSVVSQTTPASSNVASSKTTSLATSVTATKGNLVGLVDYPDDEEEDEEEESSPRKRPRLGS.

One can recognise a WH1 domain in the interval 1–100 (MSDTRRRVKV…DEIWEKICQV (100 aa)). A phosphoserine mark is found at Ser117 and Ser663. A disordered region spans residues 687–820 (EDDDEEGKAV…SPRKRPRLGS (134 aa)). Over residues 701–732 (EKSKTEDDFPDSYEKFMETKKAKESEDKENLP) the composition is skewed to basic and acidic residues. The segment covering 744 to 789 (FSHSPSATNGTNSTNSKSVVSQTTPASSNVASSKTTSLATSVTATK) has biased composition (polar residues). Residues 798-809 (YPDDEEEDEEEE) show a composition bias toward acidic residues. Ser811 bears the Phosphoserine mark.

The protein belongs to the SMEK family. As to quaternary structure, serine/threonine-protein phosphatase 4 (PP4) occurs in different assemblies of the catalytic and one or more regulatory subunits. Component of the PP4 complex PPP4C-PPP4R2-PPP4R3B.

The protein localises to the cytoplasm. It is found in the cytoskeleton. The protein resides in the microtubule organizing center. Its subcellular location is the centrosome. It localises to the nucleus. Regulatory subunit of serine/threonine-protein phosphatase 4 (PP4). May regulate the activity of PPP4C at centrosomal microtubule organizing centers. This is Serine/threonine-protein phosphatase 4 regulatory subunit 3B from Mus musculus (Mouse).